The following is a 554-amino-acid chain: Estrogen receptor beta (554 aa).

Residues 25–173 form a modulating region; the sequence is TEIKNSPAGV…NPGSKKDAHF (149 aa). NR C4-type zinc fingers lie at residues 174–194 and 210–234; these read CAVC…CEGC and CPAT…LRKC. A DNA-binding region (nuclear receptor) is located at residues 174–239; it reads CAVCSDYASG…RLRKCYEVGM (66 aa). The NR LBD domain maps to 289–521; that stretch reads SPEQFVLTLL…DLLLEMLNAH (233 aa). Residues 529-554 form a disordered region; it reads PLATHPEFGPLEQMEPGESLRKGEPQ.

This sequence belongs to the nuclear hormone receptor family. NR3 subfamily. In terms of assembly, binds DNA as a homodimer. Can form a heterodimer with ER-alpha. Brain, pituitary, skeletal muscle, liver, adrenal, kidney, intestine and ovary.

It localises to the nucleus. Binds estrogens with an affinity similar to that of ER-alpha, and activates expression of reporter genes containing estrogen response elements (ERE) in an estrogen-dependent manner. Locally synthesized estrogens may act via ER beta, in addition to ER alpha, to mediate seasonal or developmental effects on nearby song nuclei. This is Estrogen receptor beta (ESR2) from Sturnus vulgaris (Starling).